Reading from the N-terminus, the 375-residue chain is Methylthioribose-1-phosphate isomerase (375 aa).

The Proton donor role is filled by Asp259.

The protein belongs to the eIF-2B alpha/beta/delta subunits family. MtnA subfamily.

The protein localises to the cytoplasm. The protein resides in the nucleus. It catalyses the reaction 5-(methylsulfanyl)-alpha-D-ribose 1-phosphate = 5-(methylsulfanyl)-D-ribulose 1-phosphate. It participates in amino-acid biosynthesis; L-methionine biosynthesis via salvage pathway; L-methionine from S-methyl-5-thio-alpha-D-ribose 1-phosphate: step 1/6. Catalyzes the interconversion of methylthioribose-1-phosphate (MTR-1-P) into methylthioribulose-1-phosphate (MTRu-1-P). This chain is Methylthioribose-1-phosphate isomerase, found in Populus trichocarpa (Western balsam poplar).